Here is a 248-residue protein sequence, read N- to C-terminus: Phycocyanobilin:ferredoxin oxidoreductase (248 aa).

It belongs to the HY2 family.

It carries out the reaction (2R,3Z)-phycocyanobilin + 4 oxidized [2Fe-2S]-[ferredoxin] = biliverdin IXalpha + 4 reduced [2Fe-2S]-[ferredoxin] + 4 H(+). Its function is as follows. Catalyzes the four-electron reduction of biliverdin IX-alpha (2-electron reduction at both the A and D rings); the reaction proceeds via an isolatable 2-electron intermediate, 181,182-dihydrobiliverdin. The polypeptide is Phycocyanobilin:ferredoxin oxidoreductase (pcyA) (Synechococcus elongatus (strain ATCC 33912 / PCC 7942 / FACHB-805) (Anacystis nidulans R2)).